Here is a 527-residue protein sequence, read N- to C-terminus: Beta-glucosidase 19 (527 aa).

Positions Met1 to Ala21 are cleaved as a signal peptide. A beta-D-glucoside-binding residues include Gln52 and His155. A glycan (N-linked (GlcNAc...) asparagine) is linked at Asn183. Asn200–Glu201 contacts a beta-D-glucoside. Residue Glu201 is the Proton donor of the active site. Cys220 and Cys231 are joined by a disulfide. A beta-D-glucoside-binding residues include Tyr345 and Glu418. The active-site Nucleophile is the Glu418. A glycan (N-linked (GlcNAc...) asparagine) is linked at Asn462. A beta-D-glucoside is bound by residues Trp469, Glu476 to Trp477, and Phe485. Asn495 carries N-linked (GlcNAc...) asparagine glycosylation. A Prevents secretion from ER motif is present at residues His524 to Leu527.

Belongs to the glycosyl hydrolase 1 family.

It is found in the endoplasmic reticulum lumen. The catalysed reaction is Hydrolysis of terminal, non-reducing beta-D-glucosyl residues with release of beta-D-glucose.. The chain is Beta-glucosidase 19 from Arabidopsis thaliana (Mouse-ear cress).